The following is a 238-amino-acid chain: 3-dehydroquinate dehydratase (238 aa).

3-dehydroquinate contacts are provided by residues 35-37 and Arg-70; that span reads ELR. His-133 (proton donor/acceptor) is an active-site residue. Catalysis depends on Lys-160, which acts as the Schiff-base intermediate with substrate. The 3-dehydroquinate site is built by Arg-202 and Gln-225.

It belongs to the type-I 3-dehydroquinase family. Homodimer.

The enzyme catalyses 3-dehydroquinate = 3-dehydroshikimate + H2O. It functions in the pathway metabolic intermediate biosynthesis; chorismate biosynthesis; chorismate from D-erythrose 4-phosphate and phosphoenolpyruvate: step 3/7. Its function is as follows. Involved in the third step of the chorismate pathway, which leads to the biosynthesis of aromatic amino acids. Catalyzes the cis-dehydration of 3-dehydroquinate (DHQ) and introduces the first double bond of the aromatic ring to yield 3-dehydroshikimate. In Staphylococcus aureus (strain Mu3 / ATCC 700698), this protein is 3-dehydroquinate dehydratase.